We begin with the raw amino-acid sequence, 669 residues long: Probable potassium transport system protein Kup (669 aa).

12 helical membrane passes run 47-67, 86-106, 144-164, 172-192, 206-226, 252-272, 288-308, 326-346, 378-398, 404-424, 435-455, and 460-480; these read VLMLALGALGVVFGDIGTSPL, VIGILSLIFWTLVLAICIKYM, TIIGLFGAALLYGDGIITPAI, GLTLVAPQFSPYIIPLTIFVM, IGVIFGPILLIWFTVLGLLGI, GMAGFLVLGSVFLVVTGGEAL, WFFVALPALVLNYFGQGALLL, ALLPMVMLSTMATVIASQALI, IYIPIVNWSMFIGVIWLVLTF, LAAAYGIAVTGATMITTILAF, LLKSSAIFGSFLVMDLAFFGA, and IPHGGWVPLVIGAIIYLLMTT.

It belongs to the HAK/KUP transporter (TC 2.A.72) family.

The protein localises to the cell inner membrane. The enzyme catalyses K(+)(in) + H(+)(in) = K(+)(out) + H(+)(out). Its function is as follows. Transport of potassium into the cell. Likely operates as a K(+):H(+) symporter. In Bdellovibrio bacteriovorus (strain ATCC 15356 / DSM 50701 / NCIMB 9529 / HD100), this protein is Probable potassium transport system protein Kup.